Here is a 478-residue protein sequence, read N- to C-terminus: Phenylalanine--tRNA ligase alpha subunit (478 aa).

Residues Thr318, Gln357–Glu359, and Tyr397 contribute to the L-phenylalanine site. Glu399 is a Mg(2+) binding site. Phe422 provides a ligand contact to L-phenylalanine.

Belongs to the class-II aminoacyl-tRNA synthetase family. Phe-tRNA synthetase alpha subunit type 2 subfamily. Tetramer of two alpha and two beta subunits. The cofactor is Mg(2+).

Its subcellular location is the cytoplasm. The catalysed reaction is tRNA(Phe) + L-phenylalanine + ATP = L-phenylalanyl-tRNA(Phe) + AMP + diphosphate + H(+). This is Phenylalanine--tRNA ligase alpha subunit from Methanospirillum hungatei JF-1 (strain ATCC 27890 / DSM 864 / NBRC 100397 / JF-1).